The chain runs to 406 residues: MAIKALRGMKDILPPLSEKYLNFLQTASHYAHNYGFSYIETPLLEETALFKRSVGESSDIVGKEMYQFIDKGGNDIVLRPEGTAGVVRSFIEHKLDRQGGTHRFFYYGSMFRYERPQKGRFRQFHQFGVESFGEPSVYEDAAIITLAKAILDHFEIDYTLKINSLGCPVCLKPYREELIKFLEDQEHICDDCKRRRKLNPIRVLDCKNEQCQQIYENAPKLINNLCEECNQEFQTLKNLLDNEGIIYEVDENLVRGLDYYTRTAFEFVSNALGAQNAVAGGGRYDNLVEMLGGKPTPAVGFAIGIERILDLIKDKPVQREGYFIGVMLPEALNIAFDIATKLRQSNRVIMEYKPKSLKALLKGADRNNAKYALIIGEDEYNEGLVWIKDLERKEEKRVDIQNFMER.

It belongs to the class-II aminoacyl-tRNA synthetase family. As to quaternary structure, homodimer.

It localises to the cytoplasm. It carries out the reaction tRNA(His) + L-histidine + ATP = L-histidyl-tRNA(His) + AMP + diphosphate + H(+). The polypeptide is Histidine--tRNA ligase (Nitratiruptor sp. (strain SB155-2)).